Reading from the N-terminus, the 149-residue chain is Cytochrome c-type biogenesis protein CcmE (149 aa).

Over 1–8 (MNPKRKQR) the chain is Cytoplasmic. A helical; Signal-anchor for type II membrane protein membrane pass occupies residues 9 to 29 (LIIVSFLVIGVSATVGLIMAA). The Periplasmic portion of the chain corresponds to 30 to 149 (LSSNVNHFYN…AQDAAPAQTY (120 aa)). Heme-binding residues include histidine 124 and tyrosine 128.

The protein belongs to the CcmE/CycJ family.

It localises to the cell inner membrane. Heme chaperone required for the biogenesis of c-type cytochromes. Transiently binds heme delivered by CcmC and transfers the heme to apo-cytochromes in a process facilitated by CcmF and CcmH. In Hahella chejuensis (strain KCTC 2396), this protein is Cytochrome c-type biogenesis protein CcmE.